Consider the following 391-residue polypeptide: Phosphoglycerate kinase (391 aa).

Residues 21–23 (DLN), Arg36, 59–62 (HLGR), Arg113, and Arg146 contribute to the substrate site. ATP contacts are provided by residues Lys197, Glu319, and 345–348 (GGDT).

It belongs to the phosphoglycerate kinase family. As to quaternary structure, monomer.

The protein resides in the cytoplasm. The catalysed reaction is (2R)-3-phosphoglycerate + ATP = (2R)-3-phospho-glyceroyl phosphate + ADP. Its pathway is carbohydrate degradation; glycolysis; pyruvate from D-glyceraldehyde 3-phosphate: step 2/5. In Shewanella baltica (strain OS155 / ATCC BAA-1091), this protein is Phosphoglycerate kinase.